The chain runs to 331 residues: Aromatic 2-oxoacid reductase (331 aa).

Residues 154 to 155 (RI), Asp175, 205 to 206 (AP), Asn211, 232 to 234 (AAR), and Asp258 each bind NAD(+). Arg234 is an active-site residue. Glu263 is a catalytic residue. Residue His295 is the Proton donor of the active site.

This sequence belongs to the D-isomer specific 2-hydroxyacid dehydrogenase family.

It carries out the reaction (R)-3-phenyllactate + NAD(+) = 3-phenylpyruvate + NADH + H(+). The catalysed reaction is (2R)-2-hydroxy-3-(4-hydroxyphenyl)propanoate + NAD(+) = 3-(4-hydroxyphenyl)pyruvate + NADH + H(+). The enzyme catalyses 3-(indol-3-yl)lactate + NAD(+) = indole-3-pyruvate + NADH + H(+). Its pathway is amino-acid degradation. Functionally, essential for the reductive metabolism of L-phenylalanine, L-tyrosine and L-tryptophan. Catalyzes the conversion of phenylpyruvic acid to phenyllactic acid, 4-hydroxy-phenylpyruvic acid to 4-hydroxy-phenyllactic acid, and indolepyruvic acid to indolelactic acid. In Clostridium sporogenes (strain ATCC 15579), this protein is Aromatic 2-oxoacid reductase.